Here is a 319-residue protein sequence, read N- to C-terminus: Lipoyl synthase (319 aa).

A disordered region spans residues 1–29 (MVVVVDTVSDKPIRPRHPEKAARPDALSP). Basic and acidic residues predominate over residues 8 to 29 (VSDKPIRPRHPEKAARPDALSP). [4Fe-4S] cluster is bound by residues cysteine 61, cysteine 66, cysteine 72, cysteine 87, cysteine 91, cysteine 94, and serine 300. One can recognise a Radical SAM core domain in the interval 73-289 (WDRKHATFMI…ESLAYAKGFL (217 aa)).

This sequence belongs to the radical SAM superfamily. Lipoyl synthase family. The cofactor is [4Fe-4S] cluster.

The protein resides in the cytoplasm. It catalyses the reaction [[Fe-S] cluster scaffold protein carrying a second [4Fe-4S](2+) cluster] + N(6)-octanoyl-L-lysyl-[protein] + 2 oxidized [2Fe-2S]-[ferredoxin] + 2 S-adenosyl-L-methionine + 4 H(+) = [[Fe-S] cluster scaffold protein] + N(6)-[(R)-dihydrolipoyl]-L-lysyl-[protein] + 4 Fe(3+) + 2 hydrogen sulfide + 2 5'-deoxyadenosine + 2 L-methionine + 2 reduced [2Fe-2S]-[ferredoxin]. Its pathway is protein modification; protein lipoylation via endogenous pathway; protein N(6)-(lipoyl)lysine from octanoyl-[acyl-carrier-protein]: step 2/2. Its function is as follows. Catalyzes the radical-mediated insertion of two sulfur atoms into the C-6 and C-8 positions of the octanoyl moiety bound to the lipoyl domains of lipoate-dependent enzymes, thereby converting the octanoylated domains into lipoylated derivatives. In Rhodopseudomonas palustris (strain BisA53), this protein is Lipoyl synthase.